A 190-amino-acid chain; its full sequence is Elongation factor P-like protein (190 aa).

This sequence belongs to the elongation factor P family.

This chain is Elongation factor P-like protein, found in Yersinia pestis bv. Antiqua (strain Antiqua).